The primary structure comprises 463 residues: DNA polymerase subunit gamma-2, mitochondrial (463 aa).

The N-terminal 44 residues, 1 to 44 (MLLTLKNTGQLLVAACSKVARSLAKYHPRVNHHRHCVWCSKRGL), are a transit peptide targeting the mitochondrion.

As to quaternary structure, heterotrimer composed of a catalytic subunit and a homodimer of accessory subunits.

The protein resides in the mitochondrion. In terms of biological role, mitochondrial polymerase processivity subunit. It regulates the polymerase and exonuclease activities promoting processive DNA synthesis. Binds to ss-DNA. This chain is DNA polymerase subunit gamma-2, mitochondrial (polg2), found in Xenopus laevis (African clawed frog).